Here is a 93-residue protein sequence, read N- to C-terminus: Alpha-defensin 13 (93 aa).

The N-terminal stretch at 1-19 (MKTLVLLSALVLLAFQVQA) is a signal peptide. Positions 20–58 (DPIQNTDEETKTEEQPGEEDQAVSVSFGDPEGTSLQEES) are excised as a propeptide. The disordered stretch occupies residues 22-54 (IQNTDEETKTEEQPGEEDQAVSVSFGDPEGTSL). 3 cysteine pairs are disulfide-bonded: C64-C92, C66-C81, and C71-C91.

The protein belongs to the alpha-defensin family. Paneth cells of the small bowel.

The protein localises to the secreted. Its function is as follows. Probably contributes to the antimicrobial barrier function of the small bowel mucosa. The sequence is that of Alpha-defensin 13 (Defa13) from Mus musculus (Mouse).